Here is a 233-residue protein sequence, read N- to C-terminus: UPF0758 protein Rcas_0037 (233 aa).

Positions 107-229 (QIRSPTDAAQ…FVSMRERGLA (123 aa)) constitute an MPN domain. Zn(2+) is bound by residues His-178, His-180, and Asp-191. The JAMM motif signature appears at 178–191 (HNHPSGDPTPSPED).

This sequence belongs to the UPF0758 family.

This chain is UPF0758 protein Rcas_0037, found in Roseiflexus castenholzii (strain DSM 13941 / HLO8).